We begin with the raw amino-acid sequence, 315 residues long: tRNA U34 carboxymethyltransferase (315 aa).

Residues Lys79, Trp93, Lys98, Gly117, 142–144 (DPS), 169–170 (VE), Tyr193, and Arg307 each bind carboxy-S-adenosyl-L-methionine.

Belongs to the class I-like SAM-binding methyltransferase superfamily. CmoB family. In terms of assembly, homotetramer.

The enzyme catalyses carboxy-S-adenosyl-L-methionine + 5-hydroxyuridine(34) in tRNA = 5-carboxymethoxyuridine(34) in tRNA + S-adenosyl-L-homocysteine + H(+). Functionally, catalyzes carboxymethyl transfer from carboxy-S-adenosyl-L-methionine (Cx-SAM) to 5-hydroxyuridine (ho5U) to form 5-carboxymethoxyuridine (cmo5U) at position 34 in tRNAs. This chain is tRNA U34 carboxymethyltransferase, found in Helicobacter hepaticus (strain ATCC 51449 / 3B1).